A 96-amino-acid polypeptide reads, in one-letter code: YcgL domain-containing protein VS_0884 (96 aa).

Residues 1–84 (MLCSIYKSSK…PPVNELELHK (84 aa)) form the YcgL domain.

In Vibrio atlanticus (strain LGP32) (Vibrio splendidus (strain Mel32)), this protein is YcgL domain-containing protein VS_0884.